We begin with the raw amino-acid sequence, 304 residues long: Protoheme IX farnesyltransferase 1 (304 aa).

The next 8 helical transmembrane spans lie at 24–44 (VVVLMLITSLIGMLLATKAPL), 47–67 (FVPWQVLIFGNLGIGLCAGAA), 99–119 (MALGFALLLALAGMAVLLAFT), 122–142 (LTAWLTLASLLGYAALYTGFL), 150–170 (IVIGGLAGAAPPLLGWVAITG), 176–196 (PLLLVLIIFAWTPPHFWALCI), 228–248 (LVLFAVSLMPFVIHMSGLVYL), and 280–300 (YSIVYLFLLFMALLVDHYLPL).

This sequence belongs to the UbiA prenyltransferase family. Protoheme IX farnesyltransferase subfamily.

Its subcellular location is the cell inner membrane. The catalysed reaction is heme b + (2E,6E)-farnesyl diphosphate + H2O = Fe(II)-heme o + diphosphate. It participates in porphyrin-containing compound metabolism; heme O biosynthesis; heme O from protoheme: step 1/1. Functionally, converts heme B (protoheme IX) to heme O by substitution of the vinyl group on carbon 2 of heme B porphyrin ring with a hydroxyethyl farnesyl side group. This Pseudomonas paraeruginosa (strain DSM 24068 / PA7) (Pseudomonas aeruginosa (strain PA7)) protein is Protoheme IX farnesyltransferase 1.